A 309-amino-acid chain; its full sequence is Lipoyl synthase (309 aa).

[4Fe-4S] cluster contacts are provided by Cys43, Cys48, Cys54, Cys70, Cys74, Cys77, and Ser283. A Radical SAM core domain is found at 56–272 (AVRKTATFMI…KEIAMQKGFS (217 aa)).

It belongs to the radical SAM superfamily. Lipoyl synthase family. It depends on [4Fe-4S] cluster as a cofactor.

The protein resides in the cytoplasm. It catalyses the reaction [[Fe-S] cluster scaffold protein carrying a second [4Fe-4S](2+) cluster] + N(6)-octanoyl-L-lysyl-[protein] + 2 oxidized [2Fe-2S]-[ferredoxin] + 2 S-adenosyl-L-methionine + 4 H(+) = [[Fe-S] cluster scaffold protein] + N(6)-[(R)-dihydrolipoyl]-L-lysyl-[protein] + 4 Fe(3+) + 2 hydrogen sulfide + 2 5'-deoxyadenosine + 2 L-methionine + 2 reduced [2Fe-2S]-[ferredoxin]. It participates in protein modification; protein lipoylation via endogenous pathway; protein N(6)-(lipoyl)lysine from octanoyl-[acyl-carrier-protein]. Its function is as follows. Catalyzes the radical-mediated insertion of two sulfur atoms into the C-6 and C-8 positions of the octanoyl moiety bound to the lipoyl domains of lipoate-dependent enzymes, thereby converting the octanoylated domains into lipoylated derivatives. This chain is Lipoyl synthase, found in Shouchella clausii (strain KSM-K16) (Alkalihalobacillus clausii).